The primary structure comprises 453 residues: UDP-N-acetylmuramate--L-alanine ligase (453 aa).

112-118 is an ATP binding site; that stretch reads GTHGKTT.

This sequence belongs to the MurCDEF family.

The protein resides in the cytoplasm. It catalyses the reaction UDP-N-acetyl-alpha-D-muramate + L-alanine + ATP = UDP-N-acetyl-alpha-D-muramoyl-L-alanine + ADP + phosphate + H(+). Its pathway is cell wall biogenesis; peptidoglycan biosynthesis. Cell wall formation. The protein is UDP-N-acetylmuramate--L-alanine ligase of Lawsonia intracellularis (strain PHE/MN1-00).